A 274-amino-acid polypeptide reads, in one-letter code: 2,3,4,5-tetrahydropyridine-2,6-dicarboxylate N-succinyltransferase (274 aa).

Substrate-binding residues include R103 and D140.

It belongs to the transferase hexapeptide repeat family. As to quaternary structure, homotrimer.

It is found in the cytoplasm. It carries out the reaction (S)-2,3,4,5-tetrahydrodipicolinate + succinyl-CoA + H2O = (S)-2-succinylamino-6-oxoheptanedioate + CoA. It participates in amino-acid biosynthesis; L-lysine biosynthesis via DAP pathway; LL-2,6-diaminopimelate from (S)-tetrahydrodipicolinate (succinylase route): step 1/3. This is 2,3,4,5-tetrahydropyridine-2,6-dicarboxylate N-succinyltransferase from Pasteurella multocida (strain Pm70).